Consider the following 157-residue polypeptide: MASLSTSVVASASSRLWNPAASNGKICVPSASLSLRTGCRRSSSSLTSSASSQLLHCSFLSSPVSLASPFSGLSIAFDLSSQTSGLNGQRRRGLVVRAGKAALCQTKRSRSRKSLARTHGFRRRMRTTSGRATIKRRRAKGRWNLCPKSNPSSGKRA.

Residues 1 to 97 (MASLSTSVVA…GQRRRGLVVR (97 aa)) constitute a chloroplast transit peptide.

It belongs to the bacterial ribosomal protein bL34 family. As to quaternary structure, part of the 50S ribosomal subunit.

Its subcellular location is the plastid. It is found in the chloroplast. Its function is as follows. This protein binds directly to 23S ribosomal RNA. This is Large ribosomal subunit protein bL34c (RPL34) from Arabidopsis thaliana (Mouse-ear cress).